A 299-amino-acid chain; its full sequence is tRNA pseudouridine synthase B (299 aa).

Asp-38 acts as the Nucleophile in catalysis.

This sequence belongs to the pseudouridine synthase TruB family. Type 1 subfamily.

It carries out the reaction uridine(55) in tRNA = pseudouridine(55) in tRNA. Its function is as follows. Responsible for synthesis of pseudouridine from uracil-55 in the psi GC loop of transfer RNAs. The polypeptide is tRNA pseudouridine synthase B (Alkaliphilus oremlandii (strain OhILAs) (Clostridium oremlandii (strain OhILAs))).